Here is a 449-residue protein sequence, read N- to C-terminus: Nucleoprotein (449 aa).

Residues 1-55 (MSFTPGKQSSSRASSGNRSGNGILKWADQSDQSRNVQTRGRRVQSKQTATSQQPS) are disordered. Positions 9-22 (SSSRASSGNRSGNG) are enriched in low complexity. Composition is skewed to polar residues over residues 29–38 (QSDQSRNVQT) and 45–55 (SKQTATSQQPS). The tract at residues 52-194 (QQPSGGTVVP…GYYIEGSGRS (143 aa)) is RNA-binding. Residues 61–190 (PYYSWFSGIT…VLPQGYYIEG (130 aa)) enclose the CoV N NTD domain. RNA contacts are provided by arginine 106, arginine 122, and arginine 164. 3 disordered regions span residues 158–231 (PADI…VTPD), 266–297 (ILNK…NFGG), and 387–449 (MMNI…TSEI). Serine 167 carries the phosphoserine; by host modification. A Phosphothreonine; by host modification is found at threonine 174. Position 191 is a phosphoserine; by host (serine 191). Composition is skewed to polar residues over residues 194–204 (SAPNSRSTSRA) and 212–227 (GSRS…STPG). In terms of domain architecture, CoV N CTD spans 259 to 384 (AKEVRQKILN…QNLNAYQHQE (126 aa)). Basic residues predominate over residues 266 to 276 (ILNKPRQKRSP). The interval 266–385 (ILNKPRQKRS…NLNAYQHQED (120 aa)) is dimerization. Serine 391 bears the Phosphoserine; by host mark. Polar residues predominate over residues 400-410 (QKNGQVENDNI). Residues 423-440 (KSRELTAEDISLLKKMDE) are compositionally biased toward basic and acidic residues. Serine 424 is modified (phosphoserine; by host). Threonine 428 carries the phosphothreonine; by host modification.

It belongs to the betacoronavirus nucleocapsid protein family. As to quaternary structure, homooligomer. Both monomeric and oligomeric forms interact with RNA. Interacts with protein M. Interacts with NSP3; this interaction serves to tether the genome to the newly translated replicase-transcriptase complex at a very early stage of infection. Post-translationally, ADP-ribosylated. The ADP-ribosylation is retained in the virion during infection. In terms of processing, phosphorylated on serine and threonine residues.

The protein resides in the virion. It localises to the host endoplasmic reticulum-Golgi intermediate compartment. The protein localises to the host Golgi apparatus. Packages the positive strand viral genome RNA into a helical ribonucleocapsid (RNP) and plays a fundamental role during virion assembly through its interactions with the viral genome and membrane protein M. Plays an important role in enhancing the efficiency of subgenomic viral RNA transcription as well as viral replication. This is Nucleoprotein from Sus scrofa (Pig).